Here is a 115-residue protein sequence, read N- to C-terminus: Large ribosomal subunit protein bL20 (115 aa).

The protein belongs to the bacterial ribosomal protein bL20 family.

Functionally, binds directly to 23S ribosomal RNA and is necessary for the in vitro assembly process of the 50S ribosomal subunit. It is not involved in the protein synthesizing functions of that subunit. This Chlorobaculum parvum (strain DSM 263 / NCIMB 8327) (Chlorobium vibrioforme subsp. thiosulfatophilum) protein is Large ribosomal subunit protein bL20.